The sequence spans 352 residues: Photosystem II D2 protein (352 aa).

Residues 40–60 (CAYLAVGAWFTGTTFVTSWYT) form a helical membrane-spanning segment. His-117 serves as a coordination point for chlorophyll a. Residues 124–140 (GFTLRQFEIARLIGLRP) traverse the membrane as a helical segment. Residues Gln-129 and Asn-142 each coordinate pheophytin a. The chain crosses the membrane as a helical span at residues 152-165 (VFVSVFLLYPLGQA). His-197 serves as a coordination point for chlorophyll a. Residues 207 to 227 (AALLCAIHGATVENTLFEDGD) traverse the membrane as a helical segment. 2 residues coordinate a plastoquinone: His-214 and Phe-261. His-214 contacts Fe cation. Residue His-268 participates in Fe cation binding. A helical membrane pass occupies residues 278–294 (GLWMSAIGVVGLGVNLR).

Belongs to the reaction center PufL/M/PsbA/D family. PSII is composed of 1 copy each of membrane proteins PsbA, PsbB, PsbC, PsbD, PsbE, PsbF, PsbH, PsbI, PsbJ, PsbK, PsbL, PsbM, PsbT, PsbX, PsbY, PsbZ, Psb30/Ycf12, at least 3 peripheral proteins of the oxygen-evolving complex and a large number of cofactors. It forms dimeric complexes. It depends on The D1/D2 heterodimer binds P680, chlorophylls that are the primary electron donor of PSII, and subsequent electron acceptors. It shares a non-heme iron and each subunit binds pheophytin, quinone, additional chlorophylls, carotenoids and lipids. There is also a Cl(-1) ion associated with D1 and D2, which is required for oxygen evolution. The PSII complex binds additional chlorophylls, carotenoids and specific lipids. as a cofactor.

It localises to the plastid. The protein localises to the cyanelle thylakoid membrane. The catalysed reaction is 2 a plastoquinone + 4 hnu + 2 H2O = 2 a plastoquinol + O2. Photosystem II (PSII) is a light-driven water:plastoquinone oxidoreductase that uses light energy to abstract electrons from H(2)O, generating O(2) and a proton gradient subsequently used for ATP formation. It consists of a core antenna complex that captures photons, and an electron transfer chain that converts photonic excitation into a charge separation. The D1/D2 (PsbA/PsbD) reaction center heterodimer binds P680, the primary electron donor of PSII as well as several subsequent electron acceptors. D2 is needed for assembly of a stable PSII complex. The sequence is that of Photosystem II D2 protein from Cyanophora paradoxa.